Consider the following 50-residue polypeptide: uncharacterized protein (50 aa).

This is an uncharacterized protein from His1 virus (isolate Australia/Victoria) (His1V).